Reading from the N-terminus, the 143-residue chain is Large ribosomal subunit protein uL15 (143 aa).

Composition is skewed to basic residues over residues M1–G13 and K23–G38. A disordered region spans residues M1–G38.

The protein belongs to the universal ribosomal protein uL15 family. In terms of assembly, part of the 50S ribosomal subunit.

Functionally, binds to the 23S rRNA. The chain is Large ribosomal subunit protein uL15 from Methanococcus vannielii.